Here is a 48-residue protein sequence, read N- to C-terminus: Delta-stichotoxin-Hmg4b (48 aa).

Intrachain disulfides connect Cys-3–Cys-43, Cys-5–Cys-33, and Cys-26–Cys-44.

The protein belongs to the sea anemone sodium channel inhibitory toxin family. Type II subfamily.

Its subcellular location is the secreted. The protein resides in the nematocyst. In terms of biological role, binds specifically to voltage-gated sodium channels (Nav), thereby delaying their inactivation during signal transduction. Its toxicity is greater than that of RpII (AC P01534). The chain is Delta-stichotoxin-Hmg4b from Heteractis magnifica (Magnificent sea anemone).